Consider the following 229-residue polypeptide: Potassium/proton antiporter CemA (229 aa).

Helical transmembrane passes span 6-26 (AFIPFFYFTSIVFLPWLISLC), 107-127 (ILHFSTNLISFVILSGYSFWG), and 189-209 (ILSGLVSTFPVILDTIFKYWI).

The protein belongs to the CemA family.

It localises to the plastid. It is found in the chloroplast inner membrane. It catalyses the reaction K(+)(in) + H(+)(out) = K(+)(out) + H(+)(in). Contributes to K(+)/H(+) antiport activity by supporting proton efflux to control proton extrusion and homeostasis in chloroplasts in a light-dependent manner to modulate photosynthesis. Prevents excessive induction of non-photochemical quenching (NPQ) under continuous-light conditions. Indirectly promotes efficient inorganic carbon uptake into chloroplasts. The polypeptide is Potassium/proton antiporter CemA (Olimarabidopsis pumila (Dwarf rocket)).